The chain runs to 504 residues: Maturase K (504 aa).

The protein belongs to the intron maturase 2 family. MatK subfamily.

The protein resides in the plastid. It is found in the chloroplast. Usually encoded in the trnK tRNA gene intron. Probably assists in splicing its own and other chloroplast group II introns. The sequence is that of Maturase K from Adansonia digitata (Baobab tree).